The following is a 243-amino-acid chain: Terpene cyclase janB (243 aa).

Helical transmembrane passes span 19–39, 48–68, 77–97, 112–132, 134–154, 172–194, and 205–225; these read LADL…VGMV, YGMA…YCVF, LGVF…AIIF, LPWI…ALAA, IGPS…LSVG, LWLS…WMYW, and LVLW…VCFW.

Belongs to the paxB family.

It is found in the membrane. It functions in the pathway secondary metabolite biosynthesis. Terpene cyclase; part of the gene cluster that mediates the biosynthesis of the indole diterpenes janthitremanes such as shearinine K or shearinine A. The geranylgeranyl diphosphate (GGPP) synthase janG catalyzes the first step in janthitremane biosynthesis via conversion of farnesyl pyrophosphate and isopentyl pyrophosphate into geranylgeranyl pyrophosphate (GGPP). Condensation of indole-3-glycerol phosphate with GGPP by the prenyl transferase janC then forms 3-geranylgeranylindole (3-GGI). Epoxidation by the FAD-dependent monooxygenase janM leads to a epoxidized-GGI that is substrate of the terpene cyclase janB for cyclization to yield paspaline. Paspaline is subsequently converted to 13-desoxypaspaline by the cytochrome P450 monooxygenase janP, via beta-PC-M6 in a series of alpha-face oxidations. The cytochrome P450 monooxygenase janQ is proposed to carry out sequential beta-face oxidation steps at C-7 and C-13 of 13-desoxypaspaline to form paspalicine and paspalinine respectively. The indole diterpene prenyltransferase janD may then convert paspalinine into shearinine K which is substrate of janO and/or additional enzymes for oxidation and cyclization to generate shearinine A. In Penicillium janthinellum (Penicillium vitale), this protein is Terpene cyclase janB.